Here is a 537-residue protein sequence, read N- to C-terminus: MGMSEKASDTGMKGKKKDKNERNEKILNLTLEMIYLLTGEGYVIPKKKKSGDDMAPPQSCTDCILEGGCRCHVTNLTGGRALHAPGSVIQKENNKNDKKILELVSNIIQLLTGEEWEYIKRKKALYMEGIKEDPQQLSQWCEYEDKSIVMCNLEATACLNNDPRNDTVFCEHRDLSKFDTSLAEQSLPAIGIKGEPVSCEGANQSDCNINPLAEQIQGTDTPTPIMGCSLNNSLSDNYISNGIKTEATSCEAGNQSDYGNNPVAEVQLTDTTTPVKRCSLNSILSDNYIKIAIKEEPPSWEDENQTHCSINAPGEQNEEIDTPTSIMRFCLNSSLLDSSLLNAIKDDTLSCEGENYSDCSFNPLTEQTSPGCKQFTCSECGKTYTRLYNLKIHLKSHTDDKTFSCSECEECFTDHTDLVIHRRLHLTLKAFPCAECGKCFTNCTNLRAHSKTHTGEKPYSCTECGKTFRDRSHLNIHKKRHTGEKPYTCSECGKCFAYRSNLMVHVRIHTGEKPFSCSKCGKCFTDHANLIVHERMH.

A disordered region spans residues 1-21 (MGMSEKASDTGMKGKKKDKNE). 6 consecutive C2H2-type zinc fingers follow at residues 375–397 (FTCS…LKSH), 403–425 (FSCS…RRLH), 431–453 (FPCA…SKTH), 459–481 (YSCT…KKRH), 487–509 (YTCS…VRIH), and 515–537 (FSCS…ERMH).

This sequence belongs to the krueppel C2H2-type zinc-finger protein family.

Its subcellular location is the nucleus. In terms of biological role, may be involved in transcriptional regulation. The chain is Oocyte zinc finger protein XlCOF29 from Xenopus laevis (African clawed frog).